The following is a 264-amino-acid chain: Small ribosomal subunit protein eS1 (264 aa).

The tract at residues 232–264 is disordered; it reads HGEGGGAGKPSGDEAGTKVERADGYEPPVQESV. The segment covering 242–255 has biased composition (basic and acidic residues); that stretch reads SGDEAGTKVERADG.

The protein belongs to the eukaryotic ribosomal protein eS1 family. In terms of assembly, component of the small ribosomal subunit. Mature ribosomes consist of a small (40S) and a large (60S) subunit. The 40S subunit contains about 33 different proteins and 1 molecule of RNA (18S). The 60S subunit contains about 49 different proteins and 3 molecules of RNA (28S, 5.8S and 5S). Part of the small subunit (SSU) processome, composed of more than 70 proteins and the RNA chaperone small nucleolar RNA (snoRNA) U3.

It is found in the cytoplasm. Its subcellular location is the nucleus. It localises to the nucleolus. Component of the small ribosomal subunit. The ribosome is a large ribonucleoprotein complex responsible for the synthesis of proteins in the cell. Part of the small subunit (SSU) processome, first precursor of the small eukaryotic ribosomal subunit. During the assembly of the SSU processome in the nucleolus, many ribosome biogenesis factors, an RNA chaperone and ribosomal proteins associate with the nascent pre-rRNA and work in concert to generate RNA folding, modifications, rearrangements and cleavage as well as targeted degradation of pre-ribosomal RNA by the RNA exosome. May play a role during erythropoiesis. The protein is Small ribosomal subunit protein eS1 of Taeniopygia guttata (Zebra finch).